An 816-amino-acid polypeptide reads, in one-letter code: Phosphatidylinositol 4-kinase beta (816 aa).

The interval 1–30 is disordered; sequence MGDTVVEPAPLKPTSEPTSGPPGNNGGSLL. N-acetylglycine is present on glycine 2. Residues 29-242 enclose the PIK helical domain; that stretch reads LLSVITEGVG…GTKLRKLILS (214 aa). The interaction with ACBD3 stretch occupies residues 41–67; the sequence is SVIDPEVAQKACQEVLEKVKLLHGGVA. Disordered stretches follow at residues 101-120 and 248-318; these read EDEMGAAVASGTAKGARRRR and AHRK…SFSS. Position 258 is a phosphoserine (serine 258). The residue at position 263 (threonine 263) is a Phosphothreonine. Phosphoserine occurs at positions 266, 275, 277, 284, and 294. Polar residues-rich tracts occupy residues 278–297 and 306–318; these read DATASISLSSNLKRTASNPK and SSSTESIDNSFSS. Serine 428 is subject to Phosphoserine. The residue at position 438 (threonine 438) is a Phosphothreonine. Residue serine 511 is modified to Phosphoserine. A phosphothreonine mark is found at threonine 517 and threonine 519. One can recognise a PI3K/PI4K catalytic domain in the interval 535 to 801; sequence EPWQEKVRRI…MVDGSMRSIT (267 aa). The segment at 541–547 is G-loop; it reads VRRIREG. The interval 668 to 676 is catalytic loop; the sequence is QVKDRHNGN. Positions 687–711 are activation loop; it reads HIDFGFILSSSPRNLGFETSAFKLT.

This sequence belongs to the PI3/PI4-kinase family. Type III PI4K subfamily. Interacts with ARF1 and ARF3 in the Golgi complex, but not with ARF4, ARF5 or ARF6. Interacts with NCS1/FREQ in a calcium-independent manner. Interacts with CALN1/CABP8 and CALN2/CABP7; in a calcium-dependent manner; this interaction competes with NCS1/FREQ binding. Interacts with ACBD3. Interacts with ARMH3, YWHAB, YWHAE, YWHAG, YWHAH, YWHAQ, YWHAZ and SFN. Interacts with GGA2 (via VHS domain); the interaction is important for PI4KB location at the Golgi apparatus membrane. Interacts with ATG9A. In terms of assembly, (Microbial infection) Interacts with Aichi virus protein 3A. Part of a complex Aichi virus protein 3A/ACBD3/PI4KB that allows the synthesis of PI4P at the viral RNA replication sites. It depends on Mg(2+) as a cofactor. Mn(2+) serves as cofactor. Widely expressed with highest levels in heart, skeletal muscle, pancreas, testis and ovary. Weakly expressed in liver. Expressed in the innear ear in the epithelium of the spinal organ of corti.

The protein resides in the endomembrane system. It is found in the mitochondrion outer membrane. The protein localises to the rough endoplasmic reticulum membrane. Its subcellular location is the golgi apparatus. It localises to the golgi apparatus membrane. The protein resides in the cytoplasm. It is found in the perinuclear region. The enzyme catalyses a 1,2-diacyl-sn-glycero-3-phospho-(1D-myo-inositol) + ATP = a 1,2-diacyl-sn-glycero-3-phospho-(1D-myo-inositol 4-phosphate) + ADP + H(+). With respect to regulation, inhibited by wortmannin and adenosine. Increased kinase activity upon interaction with NCS1/FREQ. Its activity is regulated as follows. (Microbial infection) Activated by Aichi virus protein 3A, this activation is sensitized by ACBD3. In terms of biological role, phosphorylates phosphatidylinositol (PI) in the first committed step in the production of the second messenger inositol-1,4,5,-trisphosphate (PIP). May regulate Golgi disintegration/reorganization during mitosis, possibly via its phosphorylation. Involved in Golgi-to-plasma membrane trafficking. May play an important role in the inner ear development. Its function is as follows. (Microbial infection) Plays an essential role in Aichi virus RNA replication. Recruited by ACBD3 at the viral replication sites. Functionally, (Microbial infection) Required for cellular spike-mediated entry of human coronavirus SARS-CoV. This is Phosphatidylinositol 4-kinase beta from Homo sapiens (Human).